An 813-amino-acid polypeptide reads, in one-letter code: Leucine--tRNA ligase (813 aa).

The short motif at proline 39 to histidine 49 is the 'HIGH' region element. The 'KMSKS' region signature appears at lysine 582–serine 586. An ATP-binding site is contributed by lysine 585.

Belongs to the class-I aminoacyl-tRNA synthetase family.

The protein resides in the cytoplasm. The catalysed reaction is tRNA(Leu) + L-leucine + ATP = L-leucyl-tRNA(Leu) + AMP + diphosphate. The protein is Leucine--tRNA ligase of Campylobacter hominis (strain ATCC BAA-381 / DSM 21671 / CCUG 45161 / LMG 19568 / NCTC 13146 / CH001A).